We begin with the raw amino-acid sequence, 348 residues long: Sensor protein VraS (348 aa).

2 helical membrane-spanning segments follow: residues 13–33 and 43–63; these read ILVYSMLIAFLFIDKVFVNII and IFGIPVFLFLNLLIVLLCIIV. Residues 150-341 form the Histidine kinase domain; that stretch reads RLARELHDSV…RIEVKAPLNK (192 aa).

The protein localises to the cell membrane. The enzyme catalyses ATP + protein L-histidine = ADP + protein N-phospho-L-histidine.. Functionally, member of the two-component regulatory system VraS/VraR involved in the control of the cell wall peptidoglycan biosynthesis. Probably activates VraR by phosphorylation. This Staphylococcus epidermidis (strain ATCC 35984 / DSM 28319 / BCRC 17069 / CCUG 31568 / BM 3577 / RP62A) protein is Sensor protein VraS (vraS).